The primary structure comprises 109 residues: Translation initiation factor IF-1, chloroplastic (109 aa).

An S1-like domain is found at 18-93 (KSLNQEKENL…TRGRIIYRLK (76 aa)).

It belongs to the IF-1 family. Component of the 30S ribosomal translation pre-initiation complex which assembles on the 30S ribosome in the order IF-2 and IF-3, IF-1 and N-formylmethionyl-tRNA(fMet); mRNA recruitment can occur at any time during PIC assembly.

Its subcellular location is the plastid. The protein localises to the chloroplast. Functionally, one of the essential components for the initiation of protein synthesis. Stabilizes the binding of IF-2 and IF-3 on the 30S subunit to which N-formylmethionyl-tRNA(fMet) subsequently binds. Helps modulate mRNA selection, yielding the 30S pre-initiation complex (PIC). Upon addition of the 50S ribosomal subunit IF-1, IF-2 and IF-3 are released leaving the mature 70S translation initiation complex. The polypeptide is Translation initiation factor IF-1, chloroplastic (Tupiella akineta (Green alga)).